The chain runs to 135 residues: Phosphoribosyl-AMP cyclohydrolase (135 aa).

D89 contacts Mg(2+). C90 serves as a coordination point for Zn(2+). Mg(2+) is bound by residues D91 and D93. Zn(2+) contacts are provided by C106 and C113.

It belongs to the PRA-CH family. Homodimer. Mg(2+) serves as cofactor. It depends on Zn(2+) as a cofactor.

Its subcellular location is the cytoplasm. The enzyme catalyses 1-(5-phospho-beta-D-ribosyl)-5'-AMP + H2O = 1-(5-phospho-beta-D-ribosyl)-5-[(5-phospho-beta-D-ribosylamino)methylideneamino]imidazole-4-carboxamide. It participates in amino-acid biosynthesis; L-histidine biosynthesis; L-histidine from 5-phospho-alpha-D-ribose 1-diphosphate: step 3/9. In terms of biological role, catalyzes the hydrolysis of the adenine ring of phosphoribosyl-AMP. This chain is Phosphoribosyl-AMP cyclohydrolase, found in Bifidobacterium adolescentis (strain ATCC 15703 / DSM 20083 / NCTC 11814 / E194a).